Here is a 181-residue protein sequence, read N- to C-terminus: MARRDVLLPFLLLLATVSAVAFAEDDPDCVYTFYLRTGSIWKAGTDSIISARIYDKDGDYIGIKNLQAWAGLMGPDYNYFERGNLDIFSGRAPCLPSPICALNLTSDGSGDHHGWYVNYVEITTAGVHAQCSTQDFEIEQWLATDTSPYELTAVRNNCPVKLRDSVSRVGSEIRKKLSWVV.

The signal sequence occupies residues 1–14 (MARRDVLLPFLLLL). At A15 the chain carries N-acetylalanine. Residues 29-156 (CVYTFYLRTG…SPYELTAVRN (128 aa)) enclose the PLAT domain.

As to expression, expressed in root tips, pericycle cells, lateral root primordia, stomata, leaf vasculature, hydathodes and floral organs.

The protein resides in the endoplasmic reticulum. It is found in the plastid. Its subcellular location is the chloroplast. The protein localises to the plastoglobule. Positive regulator of abiotic stress tolerance involved in the regulation of plant growth. May be a downstream target of the abscisic acid (ABA) signaling pathway. This chain is PLAT domain-containing protein 1, found in Arabidopsis thaliana (Mouse-ear cress).